A 265-amino-acid polypeptide reads, in one-letter code: Type 1 encapsulin shell protein (265 aa).

Residues 79–81 (RAT), W87, and 90–94 (DNLER) contribute to the FMN site. Positions 184–189 (EAGHYP) are pore-forming loop. E235 contacts FMN.

It belongs to the encapsulin family. Family 1 subfamily. As to quaternary structure, homomultimeric. This encapsulin nanocompartment is formed by 60 subunits; monomers form 12 pentamers which assemble to form shells. There are 12 pores where the pentamers meet as well as 3-fold axis channels and dimer channels; none are larger than 3-4 Angstroms in diameter. The N-terminus of the protein is inside the shell, the C-terminus is outside. Probably 3, 4 or 5 Flp cargo decamers bind inside the encapulin nanocompartment. FMN is required as a cofactor.

It is found in the encapsulin nanocompartment. Proteolysis activated by calcium and cobalt. Shell component of a type 1 encapsulin nanocompartment. Assembles into proteinaceous shells 23-24 nm in diameter with 2-2.5 nm thick walls. Cargo protein Flp (ferritin-like protein, probably stores iron) is targeted to the interior via its C-terminal extension; empty intact shells can be isolated in the absence of cargo protein. Fe(2+) may be able to pass though the 5-fold and dimer channels in the protein shell. Its function is as follows. Protease that exhibits activity toward chymotrypsin and trypsin substrates. Probably does not have antibacterial activity. This Thermotoga maritima (strain ATCC 43589 / DSM 3109 / JCM 10099 / NBRC 100826 / MSB8) protein is Type 1 encapsulin shell protein.